A 543-amino-acid polypeptide reads, in one-letter code: Chaperonin GroEL 2 (543 aa).

ATP is bound by residues 29–32 (TLGP), 86–90 (DGTTT), glycine 413, 479–481 (NAA), and aspartate 495.

This sequence belongs to the chaperonin (HSP60) family. Forms a cylinder of 14 subunits composed of two heptameric rings stacked back-to-back. Interacts with the co-chaperonin GroES.

It is found in the cytoplasm. It carries out the reaction ATP + H2O + a folded polypeptide = ADP + phosphate + an unfolded polypeptide.. In terms of biological role, together with its co-chaperonin GroES, plays an essential role in assisting protein folding. The GroEL-GroES system forms a nano-cage that allows encapsulation of the non-native substrate proteins and provides a physical environment optimized to promote and accelerate protein folding. This is Chaperonin GroEL 2 from Prochlorococcus marinus (strain NATL1A).